A 437-amino-acid chain; its full sequence is Carboxypeptidase A6 (437 aa).

Positions 1–30 (MKCLGKRRGQAAAFLPLCWLFLKILQPGHS) are cleaved as a signal peptide. Residues 31–129 (HLYNNRYAGD…SSLHTQRNRR (99 aa)) constitute a propeptide, activation peptide. Residues asparagine 89 and asparagine 153 are each glycosylated (N-linked (GlcNAc...) asparagine). The 295-residue stretch at 138 to 432 (VYHSLEEIQN…LAVKNITMHL (295 aa)) folds into the Peptidase M14 domain. Zn(2+) is bound by residues histidine 196 and glutamate 199. Residues 196 to 199 (HARE), arginine 254, and 271 to 272 (NR) contribute to the substrate site. A disulfide bond links cysteine 265 and cysteine 288. Residue histidine 324 coordinates Zn(2+). Residues 325–326 (AY) and tyrosine 376 contribute to the substrate site. Glutamate 398 serves as the catalytic Proton donor/acceptor. N-linked (GlcNAc...) asparagine glycosylation is present at asparagine 427.

This sequence belongs to the peptidase M14 family. It depends on Zn(2+) as a cofactor. In terms of tissue distribution, expressed in the hippocampus, nucleus raphe, and cortex.

It is found in the secreted. It localises to the extracellular space. The protein localises to the extracellular matrix. Functionally, may be involved in the proteolytic inactivation of enkephalins and neurotensin in some brain areas. May convert inactive angiotensin I into the biologically active angiotensin II. Releases a C-terminal amino acid, with preference for large hydrophobic C-terminal amino acids and shows only very weak activity toward small amino acids and histidine. This chain is Carboxypeptidase A6 (CPA6), found in Homo sapiens (Human).